The chain runs to 719 residues: Polyribonucleotide nucleotidyltransferase (719 aa).

Positions 487 and 493 each coordinate Mg(2+). The KH domain maps to 554–613 (PRIETFKIATDKIREVIGTGGKVIREIVEKTGAKVNIEDDGTVKVASSDGEAMKAAIKWI). The 69-residue stretch at 623–691 (GQIYDGTVVK…DRGKTRLSMK (69 aa)) folds into the S1 motif domain. The segment at 691 to 719 (KVVDQTTGEDLEAKQKDAPAEAPREAAGE) is disordered. The span at 701 to 719 (LEAKQKDAPAEAPREAAGE) shows a compositional bias: basic and acidic residues.

This sequence belongs to the polyribonucleotide nucleotidyltransferase family. It depends on Mg(2+) as a cofactor.

The protein resides in the cytoplasm. It carries out the reaction RNA(n+1) + phosphate = RNA(n) + a ribonucleoside 5'-diphosphate. Functionally, involved in mRNA degradation. Catalyzes the phosphorolysis of single-stranded polyribonucleotides processively in the 3'- to 5'-direction. The chain is Polyribonucleotide nucleotidyltransferase from Bradyrhizobium sp. (strain ORS 278).